The sequence spans 249 residues: (S)-1-Phenylethanol dehydrogenase (249 aa).

NAD(+) contacts are provided by residues 17–19 (NGI), Asp38, 61–63 (CDV), Asn89, and Tyr93. Position 141 (Ser141) interacts with substrate. The active-site Proton acceptor is Tyr154. NAD(+)-binding positions include Lys158, 184–187 (PSLV), and Thr191.

It belongs to the short-chain dehydrogenases/reductases (SDR) family. Homotetramer.

It catalyses the reaction (S)-1-phenylethanol + NAD(+) = acetophenone + NADH + H(+). In terms of biological role, catalyzes the NAD-dependent stereospecific oxidation of (S)-1-phenylethanol to acetophenone in the degradation of ethylbenzene. This is (S)-1-Phenylethanol dehydrogenase (ped) from Aromatoleum aromaticum (strain DSM 19018 / LMG 30748 / EbN1) (Azoarcus sp. (strain EbN1)).